The following is a 364-amino-acid chain: 3'(2'),5'-bisphosphate nucleotidase 1 (364 aa).

The Proton acceptor role is filled by D54. Mg(2+) contacts are provided by E77, D141, I143, and D144. Catalysis depends on T146, which acts as the Proton acceptor. Adenosine 3',5'-bisphosphate is bound by residues T146, H243, S272, K275, R289, and D302. Positions 243, 272, 275, 289, and 302 each coordinate AMP. D302 is a binding site for Mg(2+).

This sequence belongs to the inositol monophosphatase superfamily. Mg(2+) is required as a cofactor.

It catalyses the reaction 3'-phosphoadenylyl sulfate + H2O = adenosine 5'-phosphosulfate + phosphate. The catalysed reaction is adenosine 3',5'-bisphosphate + H2O = AMP + phosphate. The enzyme catalyses adenosine 2',5'-bisphosphate + H2O = AMP + phosphate. In terms of biological role, phosphatase that converts adenosine 3'-phosphate 5'-phosphosulfate (PAPS) to adenosine 5'-phosphosulfate (APS) and 3'(2')-phosphoadenosine 5'-phosphate (PAP) to AMP. Regulates the flux of sulfur in the sulfur-activation pathway by converting PAPS to APS. Involved in salt tolerance. The protein is 3'(2'),5'-bisphosphate nucleotidase 1 (HAL21) of Candida albicans (strain WO-1) (Yeast).